A 177-amino-acid chain; its full sequence is Parathyroid hormone-related protein (177 aa).

Residues 1–24 form the signal peptide; sequence MLWRLVQQWSVAVFLLSYSVPSCG. A propeptide spanning residues 25–34 is cleaved from the precursor; sequence RSVEELGRRL. Residues 57 to 68 form an important for receptor binding region; the sequence is RFFLHHLIAEIH. The disordered stretch occupies residues 74-149; the sequence is ATSEVSPNSK…KRRTRSAWLT (76 aa). Positions 76-90 are enriched in polar residues; it reads SEVSPNSKPAPNTKN. The short motif at 108–129 is the Nuclear localization signal element; it reads TNKVETYKEQPLKTPGKKKKSK. The span at 109-118 shows a compositional bias: basic and acidic residues; it reads NKVETYKEQP. Positions 122 to 132 are enriched in basic residues; it reads PGKKKKSKPGK.

The protein belongs to the parathyroid hormone family. PTHrP interacts with PTH1R (via N-terminal extracellular domain). Post-translationally, there are several secretory forms, including osteostatin, arising from endoproteolytic cleavage of the initial translation product. Each of these secretory forms is believed to have one or more of its own receptors that mediates the normal paracrine, autocrine and endocrine actions.

Its subcellular location is the secreted. The protein resides in the cytoplasm. It localises to the nucleus. Its function is as follows. Neuroendocrine peptide which is a critical regulator of cellular and organ growth, development, migration, differentiation and survival and of epithelial calcium ion transport. Acts by binding to its receptor, PTH1R, activating G protein-coupled receptor signaling. Regulates endochondral bone development and epithelial-mesenchymal interactions during the formation of the mammary glands and teeth. Required for skeletal homeostasis. Promotes mammary mesenchyme differentiation and bud outgrowth by modulating mesenchymal cell responsiveness to BMPs. Up-regulates BMPR1A expression in the mammary mesenchyme and this increases the sensitivity of these cells to BMPs and allows them to respond to BMP4 in a paracrine and/or autocrine fashion. BMP4 signaling in the mesenchyme, in turn, triggers epithelial outgrowth and augments MSX2 expression, which causes the mammary mesenchyme to inhibit hair follicle formation within the nipple sheath. Functionally, potent inhibitor of osteoclastic bone resorption. This chain is Parathyroid hormone-related protein (PTHLH), found in Bos taurus (Bovine).